We begin with the raw amino-acid sequence, 627 residues long: UvrABC system protein C (627 aa).

In terms of domain architecture, GIY-YIG spans 26-105; sequence PEPGVYFMRD…IKQHQPYFNV (80 aa). The 36-residue stretch at 215–250 folds into the UVR domain; it reads QELIDILSEQMEKAAEALNFEVAARIRDQIAGLKSL.

It belongs to the UvrC family. As to quaternary structure, interacts with UvrB in an incision complex.

The protein localises to the cytoplasm. The UvrABC repair system catalyzes the recognition and processing of DNA lesions. UvrC both incises the 5' and 3' sides of the lesion. The N-terminal half is responsible for the 3' incision and the C-terminal half is responsible for the 5' incision. The protein is UvrABC system protein C of Trichormus variabilis (strain ATCC 29413 / PCC 7937) (Anabaena variabilis).